Reading from the N-terminus, the 305-residue chain is Putative ankyrin repeat protein RF_0580 (305 aa).

7 ANK repeats span residues Tyr5–Glu34, Arg39–Ile68, Ser72–Leu101, Cys107–Ser136, Phe140–Ala169, Tyr173–Ile202, and Asn206–Ile235.

This chain is Putative ankyrin repeat protein RF_0580, found in Rickettsia felis (strain ATCC VR-1525 / URRWXCal2) (Rickettsia azadi).